Consider the following 112-residue polypeptide: ATP synthase epsilon chain (112 aa).

This sequence belongs to the ATPase epsilon chain family. As to quaternary structure, F-type ATPases have 2 components, CF(1) - the catalytic core - and CF(0) - the membrane proton channel. CF(1) has five subunits: alpha(3), beta(3), gamma(1), delta(1), epsilon(1). CF(0) has three main subunits: a, b and c.

It localises to the cell inner membrane. Its function is as follows. Produces ATP from ADP in the presence of a proton gradient across the membrane. This Rickettsia peacockii (strain Rustic) protein is ATP synthase epsilon chain.